Reading from the N-terminus, the 129-residue chain is Large ribosomal subunit protein uL22 (129 aa).

Belongs to the universal ribosomal protein uL22 family. Part of the 50S ribosomal subunit.

In terms of biological role, this protein binds specifically to 23S rRNA; its binding is stimulated by other ribosomal proteins, e.g. L4, L17, and L20. It is important during the early stages of 50S assembly. It makes multiple contacts with different domains of the 23S rRNA in the assembled 50S subunit and ribosome. Its function is as follows. The globular domain of the protein is located near the polypeptide exit tunnel on the outside of the subunit, while an extended beta-hairpin is found that lines the wall of the exit tunnel in the center of the 70S ribosome. In Beijerinckia indica subsp. indica (strain ATCC 9039 / DSM 1715 / NCIMB 8712), this protein is Large ribosomal subunit protein uL22.